The primary structure comprises 95 residues: Large ribosomal subunit protein uL23 (95 aa).

Belongs to the universal ribosomal protein uL23 family. In terms of assembly, part of the 50S ribosomal subunit. Contacts protein L29, and trigger factor when it is bound to the ribosome.

Its function is as follows. One of the early assembly proteins it binds 23S rRNA. One of the proteins that surrounds the polypeptide exit tunnel on the outside of the ribosome. Forms the main docking site for trigger factor binding to the ribosome. The chain is Large ribosomal subunit protein uL23 from Coxiella burnetii (strain CbuK_Q154) (Coxiella burnetii (strain Q154)).